Consider the following 126-residue polypeptide: Aspartate 1-decarboxylase (126 aa).

Catalysis depends on Ser-25, which acts as the Schiff-base intermediate with substrate; via pyruvic acid. Pyruvic acid (Ser) is present on Ser-25. Thr-57 is a binding site for substrate. Tyr-58 (proton donor) is an active-site residue. Substrate is bound at residue Gly-73–Ala-75.

This sequence belongs to the PanD family. Heterooctamer of four alpha and four beta subunits. It depends on pyruvate as a cofactor. Is synthesized initially as an inactive proenzyme, which is activated by self-cleavage at a specific serine bond to produce a beta-subunit with a hydroxyl group at its C-terminus and an alpha-subunit with a pyruvoyl group at its N-terminus.

Its subcellular location is the cytoplasm. The catalysed reaction is L-aspartate + H(+) = beta-alanine + CO2. The protein operates within cofactor biosynthesis; (R)-pantothenate biosynthesis; beta-alanine from L-aspartate: step 1/1. In terms of biological role, catalyzes the pyruvoyl-dependent decarboxylation of aspartate to produce beta-alanine. The chain is Aspartate 1-decarboxylase from Thioalkalivibrio sulfidiphilus (strain HL-EbGR7).